Consider the following 906-residue polypeptide: Alanine--tRNA ligase (906 aa).

His570, His574, Cys674, and His678 together coordinate Zn(2+).

This sequence belongs to the class-II aminoacyl-tRNA synthetase family. Zn(2+) serves as cofactor.

The protein localises to the cytoplasm. The catalysed reaction is tRNA(Ala) + L-alanine + ATP = L-alanyl-tRNA(Ala) + AMP + diphosphate. In terms of biological role, catalyzes the attachment of alanine to tRNA(Ala) in a two-step reaction: alanine is first activated by ATP to form Ala-AMP and then transferred to the acceptor end of tRNA(Ala). Also edits incorrectly charged Ser-tRNA(Ala) and Gly-tRNA(Ala) via its editing domain. The protein is Alanine--tRNA ligase of Ureaplasma parvum serovar 3 (strain ATCC 27815 / 27 / NCTC 11736).